A 382-amino-acid chain; its full sequence is F-box/LRR-repeat/kelch-repeat protein At1g09650 (382 aa).

The region spanning 7–52 (CLMMESLPHEVVECILERLDADPLLRFKAVSKQWKSTIESPFFQRR) is the F-box domain. The LRR 1 repeat unit spans residues 78–101 (IEALTTLVLGSSSSVKIPTPWEEE). One copy of the Kelch 1 repeat lies at 180-227 (PVWLYNSIEIGLENATTCEVFDFSTNAWRYVSPAAPYRIVGCPAPVCV). One copy of the LRR 2 repeat lies at 239-262 (ETKILSFDLHTETFQVVSKAPFAN). The stretch at 270 to 319 (MCNLDNRLCVSEMKLPNQVIWSFNSGNKTWHKMCSINLDITSRWFGPTQV) is one Kelch 2 repeat.

In Arabidopsis thaliana (Mouse-ear cress), this protein is F-box/LRR-repeat/kelch-repeat protein At1g09650.